The following is a 98-amino-acid chain: U11-barytoxin-Tl1b (98 aa).

The signal sequence occupies residues 1–21 (MKTLVLVAVLGLASLYLLSYA). The propeptide occupies 22-50 (SEVQQLSRDEEEFRALVASFGGLFDTEER). 3 disulfides stabilise this stretch: cysteine 57–cysteine 71, cysteine 64–cysteine 76, and cysteine 70–cysteine 89.

Belongs to the neurotoxin 10 (Hwtx-1) family. 25 (ICK4) subfamily. Expressed by the venom gland.

It is found in the secreted. Its function is as follows. Ion channel inhibitor. The polypeptide is U11-barytoxin-Tl1b (Trittame loki (Brush-footed trapdoor spider)).